Reading from the N-terminus, the 275-residue chain is Large ribosomal subunit protein uL2 (275 aa).

The segment covering 38–53 has biased composition (polar residues); sequence SSKAGRNNNGRITTRH. Disordered stretches follow at residues 38–60 and 224–257; these read SSKAGRNNNGRITTRHQGGGHKQ and AMNPIDHPHGGGEGRTAAGRDPVSPWGTPTKGFR.

This sequence belongs to the universal ribosomal protein uL2 family. In terms of assembly, part of the 50S ribosomal subunit. Forms a bridge to the 30S subunit in the 70S ribosome.

Its function is as follows. One of the primary rRNA binding proteins. Required for association of the 30S and 50S subunits to form the 70S ribosome, for tRNA binding and peptide bond formation. It has been suggested to have peptidyltransferase activity; this is somewhat controversial. Makes several contacts with the 16S rRNA in the 70S ribosome. The sequence is that of Large ribosomal subunit protein uL2 from Burkholderia pseudomallei (strain 1106a).